Here is a 205-residue protein sequence, read N- to C-terminus: Ras-related protein Rab-4 (205 aa).

Residue 14 to 22 participates in GTP binding; sequence GSQSVGKSC. Positions 36-44 match the Effector region motif; that stretch reads STHTIGVDF. Residues 62-66, 120-123, and 150-152 contribute to the GTP site; these read DTAGQ, NKAD, and SAL. Residues C203 and C205 are each lipidated (S-geranylgeranyl cysteine). C205 bears the Cysteine methyl ester mark.

Belongs to the small GTPase superfamily. Rab family.

The protein localises to the cell membrane. Protein transport. Probably involved in vesicular traffic. The chain is Ras-related protein Rab-4 (rab4) from Dictyostelium discoideum (Social amoeba).